The sequence spans 326 residues: Pyruvate dehydrogenase E1 component subunit beta (326 aa).

Glu59 is a thiamine diphosphate binding site.

Heterodimer of an alpha and a beta chain. It depends on thiamine diphosphate as a cofactor.

The enzyme catalyses N(6)-[(R)-lipoyl]-L-lysyl-[protein] + pyruvate + H(+) = N(6)-[(R)-S(8)-acetyldihydrolipoyl]-L-lysyl-[protein] + CO2. Functionally, the pyruvate dehydrogenase complex catalyzes the overall conversion of pyruvate to acetyl-CoA and CO(2). It contains multiple copies of three enzymatic components: pyruvate dehydrogenase (E1), dihydrolipoamide acetyltransferase (E2) and lipoamide dehydrogenase (E3). This Rickettsia felis (strain ATCC VR-1525 / URRWXCal2) (Rickettsia azadi) protein is Pyruvate dehydrogenase E1 component subunit beta (pdhB).